Reading from the N-terminus, the 562-residue chain is uncharacterized protein (562 aa).

The next 5 membrane-spanning stretches (helical) occupy residues Trp-15–Ile-34, Val-41–Leu-63, Leu-78–Phe-97, Leu-104–Thr-126, and Ile-165–Leu-187. 2 consecutive RCK C-terminal domains span residues Gln-204–Phe-286 and Lys-289–Asn-374. Transmembrane regions (helical) follow at residues Leu-384–Met-403, Leu-413–Gly-430, Ile-450–Ile-472, Gly-476–Gly-498, Asn-505–Ala-524, and Tyr-539–Leu-561.

Belongs to the AAE transporter (TC 2.A.81) family.

The protein localises to the cell membrane. This is an uncharacterized protein from Bacteroides fragilis (strain YCH46).